Reading from the N-terminus, the 482-residue chain is Magnesium-dependent glutamate N-prenyltransferase (482 aa).

Residues Asn351, Thr355, Glu359, and Phe366 each contribute to the Mg(2+) site.

The protein belongs to the terpene synthase family. The cofactor is Mg(2+).

The catalysed reaction is (2E)-geranyl diphosphate + L-glutamate = N-geranyl-L-glutamate + diphosphate. Its pathway is secondary metabolite biosynthesis. Magnesium-dependent glutamate N-prenyltransferase: part of the gene cluster that mediates the biosynthesis of domoic acid (DA) and derivatives, natural products with neurochemical activity acting as ionotropic glutamate receptor (iGluR) agonists, thus being neurotoxins causing amnesic shellfish poisoning (ASP). Catalyzes the conversion of L-glutamic acid (L-Glu) to N-geranyl-L-glutamic acid (NGG) in the presence of geranyl diphosphate (GPP). Also able to catalyze the formation of farnesyl-L-glutamate from farnesyl diphosphate (FPP). Cannot use dimethylallyl diphosphate (DMAPP) as substrate. The polypeptide is Magnesium-dependent glutamate N-prenyltransferase (Pseudo-nitzschia multiseries (Marine planktonic diatom)).